We begin with the raw amino-acid sequence, 439 residues long: Tol-Pal system protein TolB (439 aa).

Residues 1 to 22 form the signal peptide; sequence MKKPLRWLAALTVLLLPLSALA.

The protein belongs to the TolB family. The Tol-Pal system is composed of five core proteins: the inner membrane proteins TolA, TolQ and TolR, the periplasmic protein TolB and the outer membrane protein Pal. They form a network linking the inner and outer membranes and the peptidoglycan layer.

Its subcellular location is the periplasm. Functionally, part of the Tol-Pal system, which plays a role in outer membrane invagination during cell division and is important for maintaining outer membrane integrity. The chain is Tol-Pal system protein TolB from Xanthomonas oryzae pv. oryzae (strain PXO99A).